A 158-amino-acid polypeptide reads, in one-letter code: Ribonuclease H (158 aa).

Residues 3 to 144 (ELKLIHIFTD…CDQLARAAAE (142 aa)) form the RNase H type-1 domain. 4 residues coordinate Mg(2+): Asp-12, Glu-50, Asp-72, and Asp-136.

The protein belongs to the RNase H family. Monomer. It depends on Mg(2+) as a cofactor.

The protein localises to the cytoplasm. It catalyses the reaction Endonucleolytic cleavage to 5'-phosphomonoester.. In terms of biological role, endonuclease that specifically degrades the RNA of RNA-DNA hybrids. This Shewanella sp. (strain MR-7) protein is Ribonuclease H.